Here is a 139-residue protein sequence, read N- to C-terminus: Transcription antitermination protein NusB (139 aa).

Belongs to the NusB family.

Functionally, involved in transcription antitermination. Required for transcription of ribosomal RNA (rRNA) genes. Binds specifically to the boxA antiterminator sequence of the ribosomal RNA (rrn) operons. The sequence is that of Transcription antitermination protein NusB from Edwardsiella ictaluri (strain 93-146).